Reading from the N-terminus, the 96-residue chain is uncharacterized protein (96 aa).

Helical transmembrane passes span leucine 27–phenylalanine 47 and methionine 52–isoleucine 72.

Its subcellular location is the cell membrane. This is an uncharacterized protein from Bacillus subtilis (strain 168).